The chain runs to 195 residues: Imidazoleglycerol-phosphate dehydratase (195 aa).

Belongs to the imidazoleglycerol-phosphate dehydratase family.

It localises to the cytoplasm. The catalysed reaction is D-erythro-1-(imidazol-4-yl)glycerol 3-phosphate = 3-(imidazol-4-yl)-2-oxopropyl phosphate + H2O. The protein operates within amino-acid biosynthesis; L-histidine biosynthesis; L-histidine from 5-phospho-alpha-D-ribose 1-diphosphate: step 6/9. This is Imidazoleglycerol-phosphate dehydratase from Jannaschia sp. (strain CCS1).